Consider the following 92-residue polypeptide: Protein AC152 (92 aa).

In terms of biological role, acts as a transactivator of AC102 and HE65 genes. Therefore, participates in the global recruitment of G-actin to the host nucleus. The sequence is that of Protein AC152 (AC152) from Autographa californica nuclear polyhedrosis virus (AcMNPV).